The chain runs to 569 residues: Peroxisomal targeting signal receptor (569 aa).

A Glycyl cysteine thioester (Cys-Gly) (interchain with G-Cter in ubiquitin) cross-link involves residue cysteine 5. The tract at residues 6–28 (SVGANPLAQLNKRVQQDRTLQHG) is amphipathic helix 1 (AH1). Lysine 17 participates in a covalent cross-link: Glycyl lysine isopeptide (Lys-Gly) (interchain with G-Cter in ubiquitin). Residues 53-71 (KFQMEQFMAGKASSGGNMF) are amphipathic helix 2 (AH2). The WxxxF/Y motif 1 signature appears at 112-116 (WSQEF). The interval 150-154 (PMNMM) is amphipathic helix 3 (AH3). The WxxxF/Y motif 2 motif lies at 181–185 (WEQQF). Residues 229–245 (FQQIWNDIHDQTDDLDS) form an amphipathic helix 4 (AH4) region. TPR repeat units follow at residues 281 to 315 (NTDA…DPGH), 316 to 349 (VDAW…DPHN), 417 to 450 (PDVQ…RPDD), 452 to 484 (CMWN…KPTF), and 486 to 518 (RARY…HEVE).

Belongs to the peroxisomal targeting signal receptor family. Interacts (via WxxxF/Y and LVxEF motifs) with PEX14; promoting translocation through the PEX13-PEX14 docking complex. Post-translationally, monoubiquitinated at Cys-5 by PEX2 during PEX5 passage through the retrotranslocation channel: monoubiquitination acts as a signal for PEX5 extraction and is required for proper export from peroxisomes and recycling. When PEX5 recycling is compromised, polyubiquitinated at Lys-17 by PEX10 during its passage through the retrotranslocation channel, leading to its degradation.

The protein localises to the cytoplasm. It is found in the cytosol. It localises to the peroxisome matrix. Receptor that mediates peroxisomal import of proteins containing a C-terminal PTS1-type tripeptide peroxisomal targeting signal (SKL-type). Binds to cargo proteins containing a PTS1 peroxisomal targeting signal in the cytosol, and translocates them into the peroxisome matrix by passing through the PEX13-PEX14 docking complex along with cargo proteins. PEX5 receptor is then retrotranslocated into the cytosol, leading to release of bound cargo in the peroxisome matrix, and reset for a subsequent peroxisome import cycle. In Eremothecium gossypii (strain ATCC 10895 / CBS 109.51 / FGSC 9923 / NRRL Y-1056) (Yeast), this protein is Peroxisomal targeting signal receptor (PEX5).